The sequence spans 110 residues: Endoribonuclease SymE (110 aa).

The region spanning 29 to 74 is the SpoVT-AbrB domain; sequence SRYPDYTRIPALTMKGQWLEAAGFATGTEVDVRVMNGCIVLTAQQP.

The protein belongs to the SymE family.

It localises to the cytoplasm. Its function is as follows. Involved in the degradation and recycling of damaged RNA. It is itself a target for degradation by the ATP-dependent protease Lon. The polypeptide is Endoribonuclease SymE (Salmonella typhi).